A 99-amino-acid chain; its full sequence is MREISQKDLNLAFGAGETDPNTQLLNDLGNNMAWGAALGAPGGLGSAALGAAGGALQTVGQGLIDHGPVNVPIPVLIGPSWNGSGSGYNSATSSSGSGS.

Positions 1-15 are cleaved as a signal peptide; sequence MREISQKDLNLAFGA. The disordered stretch occupies residues 80 to 99; sequence SWNGSGSGYNSATSSSGSGS. Residues 87–99 show a composition bias toward low complexity; sequence GYNSATSSSGSGS. Ser-99 is subject to Serine microcin E492 siderophore ester.

Belongs to the class IIa microcin family. In terms of assembly, multimer. Possibly forms a homodimer or a homotrimer. The C-terminal Ser is modified by attachment to a siderophore similar to enterobactin, which can bind one atom of iron. The modification consists of an ester linkage of the serine carboxyl to O6 of a glucose which is linked by a C-glycosidic bond to the 5'-benzoyl of a linear triester of N-(2,3-dihydroxybenzoyl)serine. Presence of the siderophore ester increases the antibacterial activity of the protein.

Its function is as follows. Channel-forming bacteriocin. Forms cation-selective channels. Active on enterobacteria, with highest activity against E.coli. Not active on other Gram-negative bacteria, Gram-positive bacteria or fungi. The unmodified protein is active against E.coli and S.enteritidis. When the siderophore ester is present at Ser-99, antibacterial activity against these species is increased and activity is also detected against E.cloacae and K.pneumoniae. Neutralized by its immunity protein MceB. The polypeptide is Microcin E492 (Klebsiella pneumoniae).